We begin with the raw amino-acid sequence, 398 residues long: L-methionine gamma-lyase (398 aa).

Residues 59–61 (YSR) and 89–90 (GM) contribute to the pyridoxal 5'-phosphate site. Residue Tyr-114 participates in substrate binding. Residue 208–210 (SAT) coordinates pyridoxal 5'-phosphate. Residue Lys-211 is modified to N6-(pyridoxal phosphate)lysine. Arg-375 is a substrate binding site.

Belongs to the trans-sulfuration enzymes family. L-methionine gamma-lyase subfamily. As to quaternary structure, homotetramer; dimer of active dimers. Pyridoxal 5'-phosphate is required as a cofactor.

The enzyme catalyses L-methionine + H2O = methanethiol + 2-oxobutanoate + NH4(+). The catalysed reaction is L-homocysteine + H2O = 2-oxobutanoate + hydrogen sulfide + NH4(+) + H(+). Its activity is regulated as follows. Irreversibly inactivated by DL-propargylglycine. In terms of biological role, catalyzes the alpha,gamma-elimination of L-methionine to produce methanethiol, 2-oxobutanoate and ammonia. Is involved in L-methionine catabolism. In fact, shows a multicatalytic function since it also catalyzes gamma-replacement of L-methionine with thiol compounds, alpha,gamma-elimination and gamma-replacement reactions of L-homocysteine and its S-substituted derivatives, O-substituted-L-homoserines and DL-selenomethionine, and, to a lesser extent, alpha,beta-elimination and beta-replacement reactions of L-cysteine, S-methyl-L-cysteine, and O-acetyl-L-serine. Also catalyzes deamination and gamma-addition reactions of L-vinylglycine. Thus, the enzyme is able to cleave C-S, C-Se, and C-O bonds of sulfur, selenium, and oxygen amino acids, respectively. The protein is L-methionine gamma-lyase of Pseudomonas putida (Arthrobacter siderocapsulatus).